Consider the following 211-residue polypeptide: Type II secretion system protein J (211 aa).

The propeptide at Met1–Gly7 is leader sequence. N-methylphenylalanine is present on Phe8. Residues Phe8–Phe28 form a helical membrane-spanning segment.

Belongs to the GSP J family.

Its subcellular location is the membrane. In terms of biological role, involved in a type II secretion system (T2SS, formerly general secretion pathway, GSP) for the export of proteins. The polypeptide is Type II secretion system protein J (xpsJ) (Xanthomonas campestris pv. campestris (strain ATCC 33913 / DSM 3586 / NCPPB 528 / LMG 568 / P 25)).